Reading from the N-terminus, the 63-residue chain is ATP synthase F(0) complex subunit 8 (63 aa).

Residues 8–24 form a helical membrane-spanning segment; sequence TWLLTILSMLLTLFVLF. The residue at position 57 (Lys-57) is an N6-acetyllysine.

The protein belongs to the ATPase protein 8 family. In terms of assembly, component of the ATP synthase complex composed at least of ATP5F1A/subunit alpha, ATP5F1B/subunit beta, ATP5MC1/subunit c (homooctomer), MT-ATP6/subunit a, MT-ATP8/subunit 8, ATP5ME/subunit e, ATP5MF/subunit f, ATP5MG/subunit g, ATP5MK/subunit k, ATP5MJ/subunit j, ATP5F1C/subunit gamma, ATP5F1D/subunit delta, ATP5F1E/subunit epsilon, ATP5PF/subunit F6, ATP5PB/subunit b, ATP5PD/subunit d, ATP5PO/subunit OSCP. ATP synthase complex consists of a soluble F(1) head domain (subunits alpha(3) and beta(3)) - the catalytic core - and a membrane F(0) domain - the membrane proton channel (subunits c, a, 8, e, f, g, k and j). These two domains are linked by a central stalk (subunits gamma, delta, and epsilon) rotating inside the F1 region and a stationary peripheral stalk (subunits F6, b, d, and OSCP). Interacts with PRICKLE3.

The protein localises to the mitochondrion membrane. Subunit 8, of the mitochondrial membrane ATP synthase complex (F(1)F(0) ATP synthase or Complex V) that produces ATP from ADP in the presence of a proton gradient across the membrane which is generated by electron transport complexes of the respiratory chain. ATP synthase complex consist of a soluble F(1) head domain - the catalytic core - and a membrane F(1) domain - the membrane proton channel. These two domains are linked by a central stalk rotating inside the F(1) region and a stationary peripheral stalk. During catalysis, ATP synthesis in the catalytic domain of F(1) is coupled via a rotary mechanism of the central stalk subunits to proton translocation. In vivo, can only synthesize ATP although its ATP hydrolase activity can be activated artificially in vitro. Part of the complex F(0) domain. In Balaenoptera musculus (Blue whale), this protein is ATP synthase F(0) complex subunit 8.